A 513-amino-acid chain; its full sequence is ATP synthase subunit alpha (513 aa).

ATP is bound at residue 169–176 (GDRQIGKT).

This sequence belongs to the ATPase alpha/beta chains family. F-type ATPases have 2 components, CF(1) - the catalytic core - and CF(0) - the membrane proton channel. CF(1) has five subunits: alpha(3), beta(3), gamma(1), delta(1), epsilon(1). CF(0) has three main subunits: a(1), b(2) and c(9-12). The alpha and beta chains form an alternating ring which encloses part of the gamma chain. CF(1) is attached to CF(0) by a central stalk formed by the gamma and epsilon chains, while a peripheral stalk is formed by the delta and b chains.

The protein localises to the cell inner membrane. It catalyses the reaction ATP + H2O + 4 H(+)(in) = ADP + phosphate + 5 H(+)(out). Produces ATP from ADP in the presence of a proton gradient across the membrane. The alpha chain is a regulatory subunit. This is ATP synthase subunit alpha from Shewanella sediminis (strain HAW-EB3).